The chain runs to 436 residues: Anhydro-N-acetylmuramic acid kinase (436 aa).

Position 32-39 (32-39) interacts with ATP; sequence GTSLDGMD.

This sequence belongs to the anhydro-N-acetylmuramic acid kinase family.

The catalysed reaction is 1,6-anhydro-N-acetyl-beta-muramate + ATP + H2O = N-acetyl-D-muramate 6-phosphate + ADP + H(+). It functions in the pathway amino-sugar metabolism; 1,6-anhydro-N-acetylmuramate degradation. It participates in cell wall biogenesis; peptidoglycan recycling. Functionally, catalyzes the specific phosphorylation of 1,6-anhydro-N-acetylmuramic acid (anhMurNAc) with the simultaneous cleavage of the 1,6-anhydro ring, generating MurNAc-6-P. Is required for the utilization of anhMurNAc either imported from the medium or derived from its own cell wall murein, and thus plays a role in cell wall recycling. This Psychrobacter arcticus (strain DSM 17307 / VKM B-2377 / 273-4) protein is Anhydro-N-acetylmuramic acid kinase.